Reading from the N-terminus, the 209-residue chain is ATP synthase subunit b', chloroplastic (209 aa).

The N-terminal 62 residues, 1–62 (MASLLARPQQ…NALMAMPAAA (62 aa)), are a transit peptide targeting the chloroplast. Residues 67 to 87 (IFDFNLTLPVMAGEFLLLMVF) form a helical membrane-spanning segment.

This sequence belongs to the ATPase B chain family. F-type ATPases have 2 components, F(1) - the catalytic core - and F(0) - the membrane proton channel. F(1) has five subunits: alpha(3), beta(3), gamma(1), delta(1), epsilon(1). F(0) has four main subunits: a(1), b(1), b'(1) and c(10-14). The alpha and beta chains form an alternating ring which encloses part of the gamma chain. F(1) is attached to F(0) by a central stalk formed by the gamma and epsilon chains, while a peripheral stalk is formed by the delta, b and b' chains.

The protein resides in the plastid. It is found in the chloroplast thylakoid membrane. Functionally, f(1)F(0) ATP synthase produces ATP from ADP in the presence of a proton or sodium gradient. F-type ATPases consist of two structural domains, F(1) containing the extramembraneous catalytic core and F(0) containing the membrane proton channel, linked together by a central stalk and a peripheral stalk. During catalysis, ATP synthesis in the catalytic domain of F(1) is coupled via a rotary mechanism of the central stalk subunits to proton translocation. Its function is as follows. Component of the F(0) channel, it forms part of the peripheral stalk, linking F(1) to F(0). The b'-subunit is a diverged and duplicated form of b found in plants and photosynthetic bacteria. In Chlamydomonas reinhardtii (Chlamydomonas smithii), this protein is ATP synthase subunit b', chloroplastic.